A 419-amino-acid polypeptide reads, in one-letter code: Phosphoglycerate kinase (419 aa).

Residues Val24, Asp25, Phe26, Asn27, Arg40, Ser63, His64, Gly66, Arg67, Leu122, Arg123, His169, and Arg170 each coordinate (2R)-3-phosphoglycerate. Gly213 serves as a coordination point for ADP. Gly213 contributes to the CDP binding site. AMP-binding residues include Ala214 and Lys215. Ala214 provides a ligand contact to ATP. Ala214 serves as a coordination point for Mg(2+). 2 residues coordinate Mg(2+): Ala217 and Asp218. Asp218 contributes to the CDP binding site. Lys219 lines the AMP pocket. ATP is bound at residue Lys219. Gly237 provides a ligand contact to ADP. Gly237 contacts CDP. Residues Gly238 and Gly313 each coordinate AMP. ATP is bound by residues Gly238 and Gly313. Positions 338 and 343 each coordinate CDP. Phe343 serves as a coordination point for ADP. Position 344 (Glu344) interacts with AMP. ATP-binding residues include Glu344, Asp375, and Thr376. Asp375 is a Mg(2+) binding site.

It belongs to the phosphoglycerate kinase family. As to quaternary structure, monomer. Requires Mg(2+) as cofactor.

It catalyses the reaction (2R)-3-phosphoglycerate + ATP = (2R)-3-phospho-glyceroyl phosphate + ADP. Its pathway is carbohydrate degradation; glycolysis; pyruvate from D-glyceraldehyde 3-phosphate: step 2/5. This chain is Phosphoglycerate kinase (PGK), found in Sterkiella nova (Ciliate).